A 192-amino-acid polypeptide reads, in one-letter code: Signal peptidase complex catalytic subunit SEC11C (192 aa).

Residues 1–28 (MVRAGAVGTHLPTSSLDIFGDLRKMNKR) are Cytoplasmic-facing. Residues 29–48 (QLYYQVLNFAMIVSSALMIW) traverse the membrane as a helical; Signal-anchor for type II membrane protein segment. Over 49–192 (KGLIVLTGSE…GAYVLLKRES (144 aa)) the chain is Lumenal. Residues S68, H108, and D134 each act as charge relay system in the active site. The interval 177–188 (ALLAVMGAYVLL) is C-terminal short (CTS) helix.

This sequence belongs to the peptidase S26B family. Component of the signal peptidase complex paralog C (SPC-C) composed of a catalytic subunit SEC11C and three accessory subunits SPCS1, SPCS2 and SPCS3. Within the complex, interacts with SPCS2 and SPCS3. The complex induces a local thinning of the ER membrane which is used to measure the length of the signal peptide (SP) h-region of protein substrates. This ensures the selectivity of the complex towards h-regions shorter than 18-20 amino acids. May undergo processing at the N-terminus.

The protein resides in the endoplasmic reticulum membrane. The catalysed reaction is Cleavage of hydrophobic, N-terminal signal or leader sequences from secreted and periplasmic proteins.. In terms of biological role, catalytic component of the signal peptidase complex (SPC) which catalyzes the cleavage of N-terminal signal sequences from nascent proteins as they are translocated into the lumen of the endoplasmic reticulum. Specifically cleaves N-terminal signal peptides that contain a hydrophobic alpha-helix (h-region) shorter than 18-20 amino acids. The chain is Signal peptidase complex catalytic subunit SEC11C (Sec11c) from Mus musculus (Mouse).